The primary structure comprises 94 residues: uncharacterized protein (94 aa).

It belongs to the phage portal family. HK97 subfamily.

This is an uncharacterized protein from Rickettsia conorii (strain ATCC VR-613 / Malish 7).